The chain runs to 329 residues: MATVQRVVITPGEPAGIGPDLVVQLAQREWPVELVVCADARLLTDRAALLGLPLSLLPYSPNHPAKPQSAGTLTLLPTALRAPVTPGQLSVENGQYVVDTLARACDGCLQGEFAALITGPVHKGVINDAGVPFTGHTEFFEARSQAKKVVMMLATEELRVALATTHLPLRAVADAITPALLHEVIGILHHDLRTKFGLADPHILVCGLNPHAGEGGHMGTEEIDTIVPVLDDLRAQGMRLSGPLPADTLFQPKYLDHADAVLAMYHDQGLPVLKYQGFGRGVNITLGLPFIRTSVDHGTALELAGRGQADVGSFITALNLAIKMIVNTQ.

Substrate is bound by residues histidine 136 and threonine 137. Positions 166, 211, and 266 each coordinate a divalent metal cation. Substrate-binding residues include lysine 274, asparagine 283, and arginine 292.

This sequence belongs to the PdxA family. As to quaternary structure, homodimer. Zn(2+) is required as a cofactor. It depends on Mg(2+) as a cofactor. Co(2+) serves as cofactor.

It is found in the cytoplasm. The catalysed reaction is 4-(phosphooxy)-L-threonine + NAD(+) = 3-amino-2-oxopropyl phosphate + CO2 + NADH. Its pathway is cofactor biosynthesis; pyridoxine 5'-phosphate biosynthesis; pyridoxine 5'-phosphate from D-erythrose 4-phosphate: step 4/5. Catalyzes the NAD(P)-dependent oxidation of 4-(phosphooxy)-L-threonine (HTP) into 2-amino-3-oxo-4-(phosphooxy)butyric acid which spontaneously decarboxylates to form 3-amino-2-oxopropyl phosphate (AHAP). In Citrobacter koseri (strain ATCC BAA-895 / CDC 4225-83 / SGSC4696), this protein is 4-hydroxythreonine-4-phosphate dehydrogenase.